Consider the following 151-residue polypeptide: MKEKEENLIAQNKKARHDYFIKETLEAGIALTGTEIKSVRARRINLRDGYVQIINGSAYLENVHISEYKQGNRYNHDPLRSRRLLLHKKEINRLAKVQAERGIAIIPLKVYLKHGFAKVLIGVGQGKKEYDKRQTIKERDQKREIRRKYGI.

It belongs to the SmpB family.

It is found in the cytoplasm. Required for rescue of stalled ribosomes mediated by trans-translation. Binds to transfer-messenger RNA (tmRNA), required for stable association of tmRNA with ribosomes. tmRNA and SmpB together mimic tRNA shape, replacing the anticodon stem-loop with SmpB. tmRNA is encoded by the ssrA gene; the 2 termini fold to resemble tRNA(Ala) and it encodes a 'tag peptide', a short internal open reading frame. During trans-translation Ala-aminoacylated tmRNA acts like a tRNA, entering the A-site of stalled ribosomes, displacing the stalled mRNA. The ribosome then switches to translate the ORF on the tmRNA; the nascent peptide is terminated with the 'tag peptide' encoded by the tmRNA and targeted for degradation. The ribosome is freed to recommence translation, which seems to be the essential function of trans-translation. This chain is SsrA-binding protein, found in Lactobacillus acidophilus (strain ATCC 700396 / NCK56 / N2 / NCFM).